The sequence spans 331 residues: Ketol-acid reductoisomerase (NADP(+)) (331 aa).

The KARI N-terminal Rossmann domain maps to 2–182 (AKIYTDKDAS…GATRAGVIET (181 aa)). NADP(+) is bound by residues 25 to 28 (YGIQ), arginine 48, serine 53, and 83 to 86 (DMEQ). Histidine 108 is an active-site residue. Position 134 (glycine 134) interacts with NADP(+). In terms of domain architecture, KARI C-terminal knotted spans 183 to 328 (TFAEETETDL…AEMRKLLFGR (146 aa)). Mg(2+) is bound by residues aspartate 191, glutamate 195, glutamate 227, and glutamate 231. Residue serine 252 coordinates substrate.

This sequence belongs to the ketol-acid reductoisomerase family. The cofactor is Mg(2+).

The enzyme catalyses (2R)-2,3-dihydroxy-3-methylbutanoate + NADP(+) = (2S)-2-acetolactate + NADPH + H(+). It catalyses the reaction (2R,3R)-2,3-dihydroxy-3-methylpentanoate + NADP(+) = (S)-2-ethyl-2-hydroxy-3-oxobutanoate + NADPH + H(+). Its pathway is amino-acid biosynthesis; L-isoleucine biosynthesis; L-isoleucine from 2-oxobutanoate: step 2/4. It functions in the pathway amino-acid biosynthesis; L-valine biosynthesis; L-valine from pyruvate: step 2/4. Functionally, involved in the biosynthesis of branched-chain amino acids (BCAA). Catalyzes an alkyl-migration followed by a ketol-acid reduction of (S)-2-acetolactate (S2AL) to yield (R)-2,3-dihydroxy-isovalerate. In the isomerase reaction, S2AL is rearranged via a Mg-dependent methyl migration to produce 3-hydroxy-3-methyl-2-ketobutyrate (HMKB). In the reductase reaction, this 2-ketoacid undergoes a metal-dependent reduction by NADPH to yield (R)-2,3-dihydroxy-isovalerate. In Pyrobaculum islandicum (strain DSM 4184 / JCM 9189 / GEO3), this protein is Ketol-acid reductoisomerase (NADP(+)).